A 422-amino-acid chain; its full sequence is Acylglycerol kinase, mitochondrial (422 aa).

K6 carries the post-translational modification N6-acetyllysine. The tract at residues 15–31 is hydrophobic; the sequence is TTAGLCLLTWGGHWLYG. The DAGKc domain occupies 58 to 199; it reads AQVKKATVFL…LDVLQIKGEK (142 aa). Residues 249-271 form a disordered region; it reads QASISYTGPTERPPSEPEETPVQ.

This sequence belongs to the AGK family. Component of the TIM22 complex, which core is composed of TIMM22, associated with TIMM10 (TIMM10A and/or TIMM10B), TIMM9, AGK and TIMM29. Interacts with SMIM26. It depends on Mg(2+) as a cofactor.

It is found in the mitochondrion inner membrane. The protein localises to the mitochondrion intermembrane space. The enzyme catalyses a monoacylglycerol + ATP = a monoacyl-sn-glycero-3-phosphate + ADP + H(+). The catalysed reaction is a 1,2-diacyl-sn-glycerol + ATP = a 1,2-diacyl-sn-glycero-3-phosphate + ADP + H(+). It carries out the reaction an N-acylsphing-4-enine + ATP = an N-acylsphing-4-enine 1-phosphate + ADP + H(+). It catalyses the reaction 1-(9Z-octadecenoyl)-sn-glycerol + ATP = 1-(9Z-octadecenoyl)-sn-glycero-3-phosphate + ADP + H(+). The enzyme catalyses 1,2-di-(9Z-octadecenoyl)-sn-glycerol + ATP = 1,2-di-(9Z-octadecenoyl)-sn-glycero-3-phosphate + ADP + H(+). The catalysed reaction is a 1-acyl-sn-glycerol + ATP = a 1-acyl-sn-glycero-3-phosphate + ADP + H(+). It carries out the reaction 1-hexadecanoyl-sn-glycerol + ATP = 1-hexadecanoyl-sn-glycero-3-phosphate + ADP + H(+). It catalyses the reaction a 2-acylglycerol + ATP = a 2-acyl-sn-glycerol 3-phosphate + ADP + H(+). The enzyme catalyses 2-(5Z,8Z,11Z,14Z-eicosatetraenoyl)-glycerol + ATP = 2-(5Z,8Z,11Z,14Z-eicosatetraenoyl)-sn-glycero-3-phosphate + ADP + H(+). The catalysed reaction is 1-(5Z,8Z,11Z,14Z-eicosatetraenoyl)-sn-glycerol + ATP = 1-(5Z,8Z,11Z,14Z-eicosatetraenoyl)-sn-glycero-3-phosphate + ADP + H(+). It carries out the reaction N-(hexanoyl)sphing-4-enine + ATP = N-hexanoylsphing-4-enine 1-phosphate + ADP + H(+). It participates in lipid metabolism; glycerolipid metabolism. Its function is as follows. Lipid kinase that can phosphorylate both monoacylglycerol and diacylglycerol to form lysophosphatidic acid (LPA) and phosphatidic acid (PA), respectively. Phosphorylates ceramide but not sphingosine. Phosphorylates 1,2-dioleoylglycerol more rapidly than 2,3-dioleoylglycerol. Independently of its lipid kinase activity, acts as a component of the TIM22 complex. The TIM22 complex mediates the import and insertion of multi-pass transmembrane proteins into the mitochondrial inner membrane by forming a twin-pore translocase that uses the membrane potential as the external driving force. In the TIM22 complex, required for the import of a subset of metabolite carriers into mitochondria, such as ANT1/SLC25A4 and SLC25A24, while it is not required for the import of TIMM23. Overexpression increases the formation and secretion of LPA, resulting in transactivation of EGFR and activation of the downstream MAPK signaling pathway, leading to increased cell growth. This is Acylglycerol kinase, mitochondrial from Pongo abelii (Sumatran orangutan).